Consider the following 765-residue polypeptide: Protein O-mannosyl-transferase 2 (765 aa).

Residues 1 to 31 form a disordered region; the sequence is MAASVVKTPKCPRRGSVKDVAQNAPRTAPTS. The helical transmembrane segment at 35–55 threads the bilayer; that stretch reads ANWNWWLLLATVFLVTFATRF. N-linked (GlcNAc...) asparagine glycans are attached at residues N80, N106, and N119. The next 5 helical transmembrane spans lie at 128–148, 175–195, 206–226, 228–248, and 268–288; these read YFCT…VYDL, ILLD…MVKV, GLRW…TISV, FVGL…LWLI, and ITLI…HLSV. Residues N290 and N314 are each glycosylated (N-linked (GlcNAc...) asparagine). MIR domains lie at 318 to 374, 384 to 440, and 445 to 501; these read PRDV…IRPH, VQIL…VLIV, and NETV…VEDN. Residue N445 is glycosylated (N-linked (GlcNAc...) asparagine). 4 helical membrane-spanning segments follow: residues 566–586, 667–687, 689–709, and 719–739; these read IYLL…ALFV, LFLG…VLYF, HYFP…NYIL, and VILG…SPLA. A glycan (N-linked (GlcNAc...) asparagine) is linked at N751.

Belongs to the glycosyltransferase 39 family. As to quaternary structure, interacts with Rt/POMT1. As to expression, at the cellular blastoderm stage, expression accumulates in the ventrally located mesoderm primordium. At germ band extension, mesoderm expression is seen as stripes of strong expression. A very strong signal is also detected in the invaginating gut. As the germ band retracts, mesodermal expression decays and becomes restricted to somatic muscle precursors.

It is found in the endoplasmic reticulum membrane. The catalysed reaction is a di-trans,poly-cis-dolichyl beta-D-mannosyl phosphate + L-seryl-[protein] = 3-O-(alpha-D-mannosyl)-L-seryl-[protein] + a di-trans,poly-cis-dolichyl phosphate + H(+). It catalyses the reaction a di-trans,poly-cis-dolichyl beta-D-mannosyl phosphate + L-threonyl-[protein] = 3-O-(alpha-D-mannosyl)-L-threonyl-[protein] + a di-trans,poly-cis-dolichyl phosphate + H(+). The protein operates within protein modification; protein glycosylation. In terms of biological role, rt/POMT1 and tw/POMT2 function as a protein O-mannosyltransferase in association with each other to generate and maintain normal muscle development. This chain is Protein O-mannosyl-transferase 2 (tw), found in Drosophila melanogaster (Fruit fly).